The following is a 242-amino-acid chain: uncharacterized protein (242 aa).

It to E.coli MazG and to plasmid pIP1100 erythromycin esterase.

This is an uncharacterized protein from Streptomyces cacaoi.